We begin with the raw amino-acid sequence, 393 residues long: Formate-dependent phosphoribosylglycinamide formyltransferase (393 aa).

N(1)-(5-phospho-beta-D-ribosyl)glycinamide-binding positions include 22–23 and Glu-82; that span reads EL. Residues Arg-114, Lys-155, 160-165, 195-198, and Glu-203 contribute to the ATP site; these read SSGKGQ and ESFV. The ATP-grasp domain maps to 119 to 308; sequence RLAAEELGLR…EFALHVRAVL (190 aa). 2 residues coordinate Mg(2+): Glu-267 and Glu-279. N(1)-(5-phospho-beta-D-ribosyl)glycinamide contacts are provided by residues Asp-286, Lys-356, and 363-364; that span reads RR.

This sequence belongs to the PurK/PurT family. As to quaternary structure, homodimer.

It catalyses the reaction N(1)-(5-phospho-beta-D-ribosyl)glycinamide + formate + ATP = N(2)-formyl-N(1)-(5-phospho-beta-D-ribosyl)glycinamide + ADP + phosphate + H(+). Its pathway is purine metabolism; IMP biosynthesis via de novo pathway; N(2)-formyl-N(1)-(5-phospho-D-ribosyl)glycinamide from N(1)-(5-phospho-D-ribosyl)glycinamide (formate route): step 1/1. Functionally, involved in the de novo purine biosynthesis. Catalyzes the transfer of formate to 5-phospho-ribosyl-glycinamide (GAR), producing 5-phospho-ribosyl-N-formylglycinamide (FGAR). Formate is provided by PurU via hydrolysis of 10-formyl-tetrahydrofolate. This is Formate-dependent phosphoribosylglycinamide formyltransferase from Oleidesulfovibrio alaskensis (strain ATCC BAA-1058 / DSM 17464 / G20) (Desulfovibrio alaskensis).